Consider the following 817-residue polypeptide: MERFKALEQLLTELDDFLRILDQENLSSTAVVKKSGLAELLRLYTKSSSSDEEYIYMNKVTVHKQQNAESQDKAPEQQNPLTNGEPPQPSSAPQKSLPDLPPPKMIPERKQLSVPKIESPEGYYEEAEPYDTSLNEDGEAVSSSYESYDEEESSKGKSAPHQWPSPEASIELMRDARICAFLWRKKWLGQWAKQLCVIKDTRLLCYKSSKDHSPQLDVSLLGSSVVHKEKQVRKKEHKLKITPLNADVIVLGLQSRDQAEQWLRVIQEVSGLPSEGACEGSQFTPDAQRLSCPKPDITEKYLSASECGSPIDGHPEVPETKDVKKKCSAGLKLSNLMNLGRKKSTSLEPPDRSLETSSYLNVLVNSQWKSRWCSVRDSHLYFYQDRNRSKAAQQPLSLLGCEVVPDPSPDHLYSFRILHNGEELAKLEAKSSEEMGHWLGLLLSESGSKTDPEEFTYDYVDADRVSCIVSAAKTSLLLMQRKFSEPNTYIDGLPSQDRQELLYDDVEVSELTTAGEAPEEATPATDAPGEPDPDRVYLDLTPIKSFLHGDSGARAPSPTPPHQDPPAETLPLPEDSDPAPDEPLIKSPENPELQMQQESQEPEEPSLGGTEVKLQAGQQKTSPSPSCPDTVAVTPAGSSPPVKDRLKAASPEIKLGKNRTEAEVKRYTEEKERLEKKKEEIRGHLAQLRREKRELKETLLKCTDKGAAASLEQKLREVDEECRVEERRRVDLELSIVEVKDSLRKAEAGPVTLGTTVDTTHLESVSPRPKAATPTPAPDCTPVNSATALKNRPLSVMVTGKGTVLQKAKEWEKKGAS.

Phosphotyrosine is present on Y56. The interval 63-164 (HKQQNAESQD…KGKSAPHQWP (102 aa)) is disordered. Acidic residues predominate over residues 123–139 (YYEEAEPYDTSLNEDGE). 2 consecutive PH domains span residues 175 to 271 (DARI…EVSG) and 353 to 447 (SLET…SESG). The residue at position 408 (S408) is a Phosphoserine. Y413 carries the phosphotyrosine modification. S484 carries the phosphoserine modification. The segment covering 512–528 (TTAGEAPEEATPATDAP) has biased composition (low complexity). Disordered regions lie at residues 512–657 (TTAG…KLGK) and 754–786 (GTTV…VNSA). Positions 652–748 (EIKLGKNRTE…VKDSLRKAEA (97 aa)) form a coiled coil. Over residues 754 to 763 (GTTVDTTHLE) the composition is skewed to polar residues. The span at 767–782 (PRPKAATPTPAPDCTP) shows a compositional bias: low complexity.

Interacts with SRC. Interacts with LCK when tyrosine phosphorylated. Tyrosine phosphorylated (by SRC).

It is found in the cytoplasm. Its function is as follows. May play a role in a signaling cascade by enhancing the kinase activity of SRC. Contributes to SRC-regulated transcription activation. The polypeptide is Actin filament-associated protein 1-like 2 (AFAP1L2) (Bos taurus (Bovine)).